A 145-amino-acid polypeptide reads, in one-letter code: Large ribosomal subunit protein uL11 (145 aa).

Belongs to the universal ribosomal protein uL11 family. Part of the ribosomal stalk of the 50S ribosomal subunit. Interacts with L10 and the large rRNA to form the base of the stalk. L10 forms an elongated spine to which L12 dimers bind in a sequential fashion forming a multimeric L10(L12)X complex. In terms of processing, one or more lysine residues are methylated.

Its function is as follows. Forms part of the ribosomal stalk which helps the ribosome interact with GTP-bound translation factors. In Rickettsia massiliae (strain Mtu5), this protein is Large ribosomal subunit protein uL11.